Here is a 77-residue protein sequence, read N- to C-terminus: Large ribosomal subunit protein bL28 (77 aa).

This sequence belongs to the bacterial ribosomal protein bL28 family.

The chain is Large ribosomal subunit protein bL28 from Polaromonas sp. (strain JS666 / ATCC BAA-500).